The sequence spans 136 residues: Piercer of microtubule wall 1 protein (136 aa).

Positions methionine 1–threonine 24 are disordered.

Belongs to the PIERCE1 family. In terms of assembly, microtubule inner protein component of sperm flagellar doublet microtubules. Interacts with CFAP53, ODAD1 and ODAD3; the interactions link the outer dynein arms docking complex (ODA-DC) to the internal microtubule inner proteins (MIP) in cilium axoneme. Expressed in airway epithelial cells.

The protein resides in the cytoplasm. It localises to the cytoskeleton. The protein localises to the cilium axoneme. It is found in the flagellum axoneme. Its function is as follows. Microtubule inner protein involved in the attachment of outer dynein arms (ODAs) to dynein-decorated doublet microtubules (DMTs) in cilia axoneme, which is required for motile cilia beating. Functions at the initial step of left-right asymmetry specification of the visceral organs. This chain is Piercer of microtubule wall 1 protein, found in Homo sapiens (Human).